Consider the following 799-residue polypeptide: Rho GTPase-activating protein gacI (799 aa).

One can recognise a Rho-GAP domain in the interval 226-451 (IKLEEVFARE…LLVEHVLTIF (226 aa)). Polar residues predominate over residues 472–520 (RSQSDISSQTKPLPSLPTSPQNRSAIITGDSSSPSLNTPPVKSSLNSSD). Disordered regions lie at residues 472–572 (RSQS…PTSN) and 741–799 (EKQQ…LSNQ). The segment covering 525–549 (DNGSNNNNNNNTTNTITNNGIADTA) has biased composition (low complexity). Residues 550-568 (TPPPPTTPTAPTTPPPPTT) are compositionally biased toward pro residues. Low complexity-rich tracts occupy residues 743–752 (QQQQQQQQTN) and 759–791 (ISSN…LNSS).

Its subcellular location is the cytoplasm. Functionally, rho GTPase-activating protein involved in the signal transduction pathway. This Dictyostelium discoideum (Social amoeba) protein is Rho GTPase-activating protein gacI (gacI).